A 277-amino-acid chain; its full sequence is Putative phosphoenolpyruvate synthase regulatory protein (277 aa).

Position 157 to 164 (157 to 164 (GVSRSGKT)) interacts with ADP.

This sequence belongs to the pyruvate, phosphate/water dikinase regulatory protein family. PSRP subfamily.

It carries out the reaction [pyruvate, water dikinase] + ADP = [pyruvate, water dikinase]-phosphate + AMP + H(+). It catalyses the reaction [pyruvate, water dikinase]-phosphate + phosphate + H(+) = [pyruvate, water dikinase] + diphosphate. In terms of biological role, bifunctional serine/threonine kinase and phosphorylase involved in the regulation of the phosphoenolpyruvate synthase (PEPS) by catalyzing its phosphorylation/dephosphorylation. The protein is Putative phosphoenolpyruvate synthase regulatory protein of Azoarcus sp. (strain BH72).